Consider the following 400-residue polypeptide: Endophilin-B2 (400 aa).

Position 1 is an N-acetylmethionine (methionine 1). The segment at 1 to 27 (MDFNMKKLASDAGIFFTRAVQFTEEKF) is membrane-binding amphipathic helix. At serine 10 the chain carries Phosphoserine. A BAR domain is found at 24 to 287 (EEKFGQAEKT…LGSSQGAIFP (264 aa)). The stretch at 205-234 (SASALWNDEVDKAEQELRVAQTEFDRQAEV) forms a coiled coil. Residues 340 to 400 (SGTRKARVLY…VPVTYLELLS (61 aa)) enclose the SH3 domain. A Phosphoserine modification is found at serine 400.

The protein belongs to the endophilin family. Homodimer, and heterodimer with SH3GLB1.

The protein localises to the cytoplasm. The protein is Endophilin-B2 (Sh3glb2) of Mus musculus (Mouse).